Consider the following 469-residue polypeptide: Asparagine--tRNA ligase (469 aa).

The protein belongs to the class-II aminoacyl-tRNA synthetase family. As to quaternary structure, homodimer.

Its subcellular location is the cytoplasm. The catalysed reaction is tRNA(Asn) + L-asparagine + ATP = L-asparaginyl-tRNA(Asn) + AMP + diphosphate + H(+). In Porphyromonas gingivalis (strain ATCC 33277 / DSM 20709 / CIP 103683 / JCM 12257 / NCTC 11834 / 2561), this protein is Asparagine--tRNA ligase.